We begin with the raw amino-acid sequence, 351 residues long: CCN family member 3 (351 aa).

The N-terminal stretch at M1–V24 is a signal peptide. One can recognise an IGFBP N-terminal domain in the interval R27 to L101. 6 cysteine pairs are disulfide-bonded: C31/C57, C35/C59, C39/C60, C46/C63, C71/C85, and C77/C98. Positions D104–D170 constitute a VWFC domain. The TSP type-1 domain maps to N201–E246. 5 cysteine pairs are disulfide-bonded: C258-C295, C275-C309, C286-C325, C289-C327, and C294-C331. The CTCK domain occupies C258 to P332. A glycan (N-linked (GlcNAc...) asparagine) is linked at N274.

The protein belongs to the CCN family. Brain and heart, and at a lower level in muscle and intestine, in the embryo. Lung and less so in brain and spleen, in adult chicken.

It localises to the secreted. The protein resides in the cytoplasm. It is found in the cell junction. Its subcellular location is the gap junction. In terms of biological role, immediate-early protein likely to play a role in cell growth regulation. Its overexpression is associated with tumorigenesis and expression of a N-terminal-truncated version of CCN3 gene in chicken embryonic fibroblasts (CEF) is sufficient to induce the transformation of CEF in vitro. The protein is CCN family member 3 (CCN3) of Gallus gallus (Chicken).